The chain runs to 449 residues: MREILHVQGGQCGNQIGSKFWEVICDEHGIDQTGKYISEGGSDTQLERINVYYNEASGGRYVPRAVLMDLEPGTMESIRSGPFGKIFRPDNFVFGQSGAGNNWAKGHYTEGAELIDSVLDVVRKEAENCDCLQGFQVCHSLGGGTGSGMGTLLISKIREEYPDRMMLTFSVFPSPKVSDTVVEPYNATLSVHQLVENADECMVLDNEALYDICFRTLKLSTPSFGDLNHLISATMSGVTCCLRFPGQLNSDLRKLAVNLIPFPRLHFFMVGFAPLTSRGSQQYVSLTVPELTQQMWDAKNMMCAADPRHGRYLTASAMFRGKMSTKEVDEQIINVQNKNSSYFVEWIPNNVKSSVCDIPPKNLKMSSTFIGNSTSIQEMFRRVSEQFTAMFRRKAFLHWYTGEGMDEMEFTEAESNMNDLVAEYQQYQDAIAEEEDEYEEEGEEQYDEQ.

Gln11, Glu71, Ser140, Gly144, Thr145, Gly146, Asn206, and Asn228 together coordinate GTP. Glu71 contributes to the Mg(2+) binding site.

Belongs to the tubulin family. Dimer of alpha and beta chains. A typical microtubule is a hollow water-filled tube with an outer diameter of 25 nm and an inner diameter of 15 nM. Alpha-beta heterodimers associate head-to-tail to form protofilaments running lengthwise along the microtubule wall with the beta-tubulin subunit facing the microtubule plus end conferring a structural polarity. Microtubules usually have 13 protofilaments but different protofilament numbers can be found in some organisms and specialized cells. The cofactor is Mg(2+).

The protein localises to the cytoplasm. It localises to the cytoskeleton. Functionally, tubulin is the major constituent of microtubules, a cylinder consisting of laterally associated linear protofilaments composed of alpha- and beta-tubulin heterodimers. Microtubules grow by the addition of GTP-tubulin dimers to the microtubule end, where a stabilizing cap forms. Below the cap, tubulin dimers are in GDP-bound state, owing to GTPase activity of alpha-tubulin. This Cicer arietinum (Chickpea) protein is Tubulin beta chain (TUBB).